The sequence spans 591 residues: Aspartate--tRNA ligase (591 aa).

Residue glutamate 176 participates in L-aspartate binding. Positions 200–203 (QILK) are aspartate. L-aspartate is bound at residue arginine 222. ATP-binding positions include 222 to 224 (RDE) and glutamine 231. An L-aspartate-binding site is contributed by histidine 450. Glutamate 484 contacts ATP. Arginine 491 contributes to the L-aspartate binding site. 536–539 (GLDR) lines the ATP pocket.

It belongs to the class-II aminoacyl-tRNA synthetase family. Type 1 subfamily. As to quaternary structure, homodimer.

Its subcellular location is the cytoplasm. It catalyses the reaction tRNA(Asp) + L-aspartate + ATP = L-aspartyl-tRNA(Asp) + AMP + diphosphate. In terms of biological role, catalyzes the attachment of L-aspartate to tRNA(Asp) in a two-step reaction: L-aspartate is first activated by ATP to form Asp-AMP and then transferred to the acceptor end of tRNA(Asp). This Listeria monocytogenes serovar 1/2a (strain ATCC BAA-679 / EGD-e) protein is Aspartate--tRNA ligase.